Reading from the N-terminus, the 638-residue chain is Chaperone protein HtpG (638 aa).

The interval 1-346 (MSQQETHGFQ…SNDLPLNVSR (346 aa)) is a; substrate-binding. The segment at 347–563 (EILQDNKVTT…EGEMSTQMIK (217 aa)) is b. Residues 564–638 (LMQAAGQDVP…MNQMLLASVK (75 aa)) are c.

It belongs to the heat shock protein 90 family. Homodimer.

The protein resides in the cytoplasm. Functionally, molecular chaperone. Has ATPase activity. In Shewanella pealeana (strain ATCC 700345 / ANG-SQ1), this protein is Chaperone protein HtpG.